Here is a 385-residue protein sequence, read N- to C-terminus: 8-amino-7-oxononanoate synthase (385 aa).

Position 21 (Arg21) interacts with substrate. 108–109 is a pyridoxal 5'-phosphate binding site; it reads GF. His133 is a substrate binding site. Pyridoxal 5'-phosphate is bound by residues Ser179, His207, and Thr233. Position 236 is an N6-(pyridoxal phosphate)lysine (Lys236). Thr352 contributes to the substrate binding site.

This sequence belongs to the class-II pyridoxal-phosphate-dependent aminotransferase family. BioF subfamily. In terms of assembly, homodimer. Pyridoxal 5'-phosphate is required as a cofactor.

It catalyses the reaction 6-carboxyhexanoyl-[ACP] + L-alanine + H(+) = (8S)-8-amino-7-oxononanoate + holo-[ACP] + CO2. It functions in the pathway cofactor biosynthesis; biotin biosynthesis. Its function is as follows. Catalyzes the decarboxylative condensation of pimeloyl-[acyl-carrier protein] and L-alanine to produce 8-amino-7-oxononanoate (AON), [acyl-carrier protein], and carbon dioxide. The protein is 8-amino-7-oxononanoate synthase of Salmonella newport (strain SL254).